The primary structure comprises 479 residues: Probable periplasmic serine endoprotease DegP-like (479 aa).

An N-terminal signal peptide occupies residues 1–27 (MSIPRMKSYFSLIAAVLMLGQVATAQA). Residues 77-99 (LERSMPPGSRPPGAGKGDRQRET) are disordered. Active-site charge relay system residues include His-119, Asp-149, and Ser-222. Substrate-binding positions include 220–222 (GNS) and 277–281 (LGVVI). 2 consecutive PDZ domains span residues 266-357 (LKAS…IRDG) and 363-468 (TVTV…LRQG).

This sequence belongs to the peptidase S1C family.

It is found in the periplasm. The catalysed reaction is Acts on substrates that are at least partially unfolded. The cleavage site P1 residue is normally between a pair of hydrophobic residues, such as Val-|-Val.. Might be efficient in the degradation of transiently denatured and unfolded proteins which accumulate in the periplasm following stress conditions. This chain is Probable periplasmic serine endoprotease DegP-like (mucD), found in Pseudomonas savastanoi pv. phaseolicola (strain 1448A / Race 6) (Pseudomonas syringae pv. phaseolicola (strain 1448A / Race 6)).